The sequence spans 175 residues: Shikimate kinase (175 aa).

An ATP-binding site is contributed by 17–22 (GAGKST). Ser-21 lines the Mg(2+) pocket. Asp-39, Arg-63, and Gly-85 together coordinate substrate. Arg-123 is a binding site for ATP. Position 142 (Arg-142) interacts with substrate. ATP is bound at residue Gln-159.

This sequence belongs to the shikimate kinase family. As to quaternary structure, monomer. The cofactor is Mg(2+).

The protein resides in the cytoplasm. It carries out the reaction shikimate + ATP = 3-phosphoshikimate + ADP + H(+). Its pathway is metabolic intermediate biosynthesis; chorismate biosynthesis; chorismate from D-erythrose 4-phosphate and phosphoenolpyruvate: step 5/7. Functionally, catalyzes the specific phosphorylation of the 3-hydroxyl group of shikimic acid using ATP as a cosubstrate. The chain is Shikimate kinase from Photobacterium profundum (strain SS9).